The chain runs to 176 residues: Co-chaperone protein HscB homolog (176 aa).

In terms of domain architecture, J spans 7–79; that stretch reads THFSLFGLPE…LKRATYLLHL (73 aa).

The protein belongs to the HscB family. Interacts with HscA and stimulates its ATPase activity.

In terms of biological role, co-chaperone involved in the maturation of iron-sulfur cluster-containing proteins. Seems to help targeting proteins to be folded toward HscA. This is Co-chaperone protein HscB homolog from Ralstonia nicotianae (strain ATCC BAA-1114 / GMI1000) (Ralstonia solanacearum).